A 198-amino-acid chain; its full sequence is GTP cyclohydrolase-2 (198 aa).

Residue 52-56 participates in GTP binding; that stretch reads RMHSE. The Zn(2+) site is built by Cys57, Cys68, and Cys70. GTP is bound by residues Gln73, 94 to 96, and Thr116; that span reads EGR. Residue Asp128 is the Proton acceptor of the active site. The active-site Nucleophile is the Arg130. Residues Thr151 and Lys156 each coordinate GTP.

Belongs to the GTP cyclohydrolase II family. Requires Zn(2+) as cofactor.

It catalyses the reaction GTP + 4 H2O = 2,5-diamino-6-hydroxy-4-(5-phosphoribosylamino)-pyrimidine + formate + 2 phosphate + 3 H(+). It functions in the pathway cofactor biosynthesis; riboflavin biosynthesis; 5-amino-6-(D-ribitylamino)uracil from GTP: step 1/4. Its function is as follows. Catalyzes the conversion of GTP to 2,5-diamino-6-ribosylamino-4(3H)-pyrimidinone 5'-phosphate (DARP), formate and pyrophosphate. This is GTP cyclohydrolase-2 from Vibrio cholerae serotype O1 (strain ATCC 39315 / El Tor Inaba N16961).